We begin with the raw amino-acid sequence, 162 residues long: RNA pyrophosphohydrolase (162 aa).

The 143-residue stretch at 7 to 149 (KYRPCVGIML…KKEVYKTVIE (143 aa)) folds into the Nudix hydrolase domain. A Nudix box motif is present at residues 40-61 (GGVDDGEELEQAALRELLEEVG).

Belongs to the Nudix hydrolase family. RppH subfamily. A divalent metal cation serves as cofactor.

Accelerates the degradation of transcripts by removing pyrophosphate from the 5'-end of triphosphorylated RNA, leading to a more labile monophosphorylated state that can stimulate subsequent ribonuclease cleavage. The sequence is that of RNA pyrophosphohydrolase from Wolbachia pipientis wMel.